The chain runs to 149 residues: Vesicle-associated protein 3-1 (149 aa).

An N-acetylmethionine modification is found at Met1. An N-acetylserine; in Vesicle-associated protein 3-1, N-terminally processed modification is found at Ser2. Residues 6–126 (LLEIEPMYLQ…EETKLRVTYV (121 aa)) enclose the MSP domain.

It belongs to the VAMP-associated protein (VAP) (TC 9.B.17) family.

Functionally, may play a role in vesicle trafficking. The protein is Vesicle-associated protein 3-1 (PVA31) of Arabidopsis thaliana (Mouse-ear cress).